Here is a 696-residue protein sequence, read N- to C-terminus: Elongation factor G (696 aa).

The 275-residue stretch at 8 to 282 folds into the tr-type G domain; sequence KDYRNIGIMA…AVVDYLPSPL (275 aa). GTP-binding positions include 17–24, 81–85, and 135–138; these read AHIDAGKT, DTPGH, and NKMD.

It belongs to the TRAFAC class translation factor GTPase superfamily. Classic translation factor GTPase family. EF-G/EF-2 subfamily.

It localises to the cytoplasm. Catalyzes the GTP-dependent ribosomal translocation step during translation elongation. During this step, the ribosome changes from the pre-translocational (PRE) to the post-translocational (POST) state as the newly formed A-site-bound peptidyl-tRNA and P-site-bound deacylated tRNA move to the P and E sites, respectively. Catalyzes the coordinated movement of the two tRNA molecules, the mRNA and conformational changes in the ribosome. The protein is Elongation factor G of Mycoplasmopsis synoviae (strain 53) (Mycoplasma synoviae).